The sequence spans 466 residues: Glutamate decarboxylase alpha (466 aa).

Substrate contacts are provided by threonine 62 and asparagine 83. Residues 126–127, threonine 212, and histidine 275 each bind pyridoxal 5'-phosphate; that span reads SS. At lysine 276 the chain carries N6-(pyridoxal phosphate)lysine.

Belongs to the group II decarboxylase family. In terms of assembly, homohexamer. Requires pyridoxal 5'-phosphate as cofactor.

It catalyses the reaction L-glutamate + H(+) = 4-aminobutanoate + CO2. In terms of biological role, converts glutamate to gamma-aminobutyrate (GABA), consuming one intracellular proton in the reaction. The gad system helps to maintain a near-neutral intracellular pH when cells are exposed to extremely acidic conditions. The ability to survive transit through the acidic conditions of the stomach is essential for successful colonization of the mammalian host by commensal and pathogenic bacteria. This Shigella flexneri protein is Glutamate decarboxylase alpha (gadA).